The sequence spans 272 residues: HMP-PP phosphatase (272 aa).

Aspartate 8 (nucleophile) is an active-site residue. Aspartate 8, aspartate 10, and aspartate 212 together coordinate Mg(2+).

This sequence belongs to the HAD-like hydrolase superfamily. Cof family. Requires Mg(2+) as cofactor.

It catalyses the reaction 4-amino-2-methyl-5-(diphosphooxymethyl)pyrimidine + H2O = 4-amino-2-methyl-5-(phosphooxymethyl)pyrimidine + phosphate + H(+). Functionally, catalyzes the hydrolysis of 4-amino-2-methyl-5-hydroxymethylpyrimidine pyrophosphate (HMP-PP) to 4-amino-2-methyl-5-hydroxymethylpyrimidine phosphate (HMP-P). The chain is HMP-PP phosphatase from Escherichia coli (strain 55989 / EAEC).